Consider the following 665-residue polypeptide: Long chain acyl-CoA synthetase 3 (665 aa).

228–239 is a binding site for ATP; it reads IMYTSGTTGDPK. Residues 495–519 are fatty acid-binding; sequence DGWLHTGDVGEWQPDGAMKIIDRKK.

This sequence belongs to the ATP-dependent AMP-binding enzyme family. Requires Mg(2+) as cofactor.

The catalysed reaction is a long-chain fatty acid + ATP + CoA = a long-chain fatty acyl-CoA + AMP + diphosphate. It participates in lipid metabolism; fatty acid metabolism. Functionally, activation of long-chain fatty acids for both synthesis of cellular lipids, and degradation via beta-oxidation. Preferentially uses palmitate, palmitoleate, oleate and linoleate. The chain is Long chain acyl-CoA synthetase 3 (LACS3) from Arabidopsis thaliana (Mouse-ear cress).